The chain runs to 2273 residues: Nonribosomal peptide synthetase hasD (2273 aa).

The tract at residues 100 to 446 (FHDQLQKHSS…AGLGLALGYF (347 aa)) is adenylation 1. The Carrier 1 domain maps to 588-664 (ERGLGAVESV…NIAAAVVELS (77 aa)). Ser625 carries the O-(pantetheine 4'-phosphoryl)serine modification. A condensation 1 region spans residues 696 to 1120 (IAPMTDMQTR…AAQPDTDLSN (425 aa)). Residues 1156–1487 (ENSIQAHPDI…SGVQVTPGYL (332 aa)) form an adenylation 2 region. The Carrier 2 domain maps to 1634 to 1714 (DLETDTQRVL…DLSLAIDELV (81 aa)). An O-(pantetheine 4'-phosphoryl)serine modification is found at Ser1673. The condensation 2 stretch occupies residues 1735–2127 (GQLPLSYLEK…QDLEVDMEYD (393 aa)). The disordered stretch occupies residues 2174 to 2200 (PVGLTPSHEGSAELTNGTNKTDSTTGQ). Over residues 2186 to 2200 (ELTNGTNKTDSTTGQ) the composition is skewed to polar residues. A Carrier 3 domain is found at 2201–2273 (QELENNLTDV…LELATCAVII (73 aa)). Residue Ser2235 is modified to O-(pantetheine 4'-phosphoryl)serine.

This sequence belongs to the NRP synthetase family. It depends on pantetheine 4'-phosphate as a cofactor.

It participates in secondary metabolite biosynthesis. Functionally, nonribosomal peptide synthetase; part of the gene cluster that mediates the biosynthesis of hexadehydro-astechrome (HAS), a tryptophan-derived iron(III)-complex that acts as a virulence factor in infected mice. Within the pathway, the NRPS condenses tryptophan and alanine to produce the Trp-Ala dipeptide. The 7-dimethylallyltryptophan synthase hasE then catalyzes the prenylation of the hasD-tethered tryptophan or the resulting tethered Trp-Ala dipeptide at the C-7 position of the indole moiety. HAS biosynthesis continues via tethered intermediates with the succesive actions of the cytochrome P450 monooxygenase hasH, the O-methyltransferase hasC, and the FAD-linked oxidoreductase hasG. The resulting O-methylated diketopiperazine is then released from hasD. Finally, three O-methylated diketopiperazine molecules assemble in a trimeric complex with Fe(III) to produce hexadehydro-astechrome. This is Nonribosomal peptide synthetase hasD from Aspergillus fumigatus (strain CBS 144.89 / FGSC A1163 / CEA10) (Neosartorya fumigata).